Here is a 675-residue protein sequence, read N- to C-terminus: MTIRHQGQQYRPRMAFLQKIEALVKDMQNPETGVRMHNQRVLVTSVPHAMTGGDVLQWITQRLWISNLEAQNLGNFIVKYGYIYPLQDPKNLILKPDSSLYRFQTPYFWPTQQWPAEDTDYAIYLAKRNIKKKGILEEYEKENYDFLNKKINYKWDFVIMQAKEQYRTGKERNKADRYALDCQEKAYWLVHRSPPGMNNVLDYGLDRVTNPNEVKKQTVTAVRKEIMYYQQALMRSTVKSSVSLGGIVKYSEQFSSNDAIMSGCLPSNPWITDDTQFWDLNAKLVEIPTKMRVERWAFNFSELIRDPKGRQSFQYFLKKEFSGENLGFWEACEDLKYGDQSKVKEKAEEIYKLFLAPGARRWINIDGKTMDITVKGLRHPHRYVLDAAQTHIYMLMKKDSYARYLKSPIYKEMLAKAIEPQETTKRSSTLPFMRRHLRSSPSPVILRQLEEEEKAREAANTVDITQPGQHLAPSPHLAVYTGTCVPPSPSSPFSPSCRSPRKPFASPSRFIRRPSIAICPSPSRVALEGSSGLEPKGEASWSGANSGPSVTENREPSADHSRPQPRAPPKARAALSLGRFLRRGCLASPVFARLSPKCPSVSHGKVQPLGDMGQQLPRLKPKKVANFFQIKMEMPTDSGTCLMDSDDPRAGESGDQTTEKEVICPWESLAEGKAG.

The DEP domain occupies 30 to 105 (PETGVRMHNQ…PDSSLYRFQT (76 aa)). In terms of domain architecture, G protein gamma spans 222-283 (VRKEIMYYQQ…DTQFWDLNAK (62 aa)). In terms of domain architecture, RGS spans 299–414 (NFSELIRDPK…LKSPIYKEML (116 aa)). 2 disordered regions span residues 524-571 (RVAL…PPKA) and 637-662 (DSGT…EKEV). The segment covering 542 to 551 (SGANSGPSVT) has biased composition (polar residues). Basic and acidic residues-rich tracts occupy residues 552 to 562 (ENREPSADHSR) and 646 to 662 (DDPR…EKEV).

As to quaternary structure, heterodimer with GNB5. Interacts with RGS7BP, leading to regulate the subcellular location of the heterodimer formed with GNB5. Component of the RGS9-1-Gbeta5 complex composed of RGS9 (RGS9-1), Gbeta5 (GNB5) and RGS9BP. Interacts with PDE6G and GNAT1. In terms of processing, retinal isoform 1 is light-dependent phosphorylated at 'Ser-475'. Phosphorylation is decreased by light exposition. Interaction with RGS9BP is decreased when isoform 1 is phosphorylated at 'Ser-475'. Isoform 1 is expressed in photoreceptor outer segments. Isoform 2 is expressed in brain striatum.

It localises to the membrane. Its function is as follows. Inhibits signal transduction by increasing the GTPase activity of G protein alpha subunits thereby driving them into their inactive GDP-bound form. Binds to GNAT1. Involved in phototransduction; key element in the recovery phase of visual transduction. The polypeptide is Regulator of G-protein signaling 9 (Rgs9) (Mus musculus (Mouse)).